Reading from the N-terminus, the 800-residue chain is Probable inorganic carbon transporter subunit DabA (800 aa).

Zn(2+)-binding residues include Cys-329, Asp-331, His-488, and Cys-503.

The protein belongs to the inorganic carbon transporter (TC 9.A.2) DabA family. Forms a complex with DabB. Zn(2+) is required as a cofactor.

It is found in the cell inner membrane. Functionally, part of an energy-coupled inorganic carbon pump. This is Probable inorganic carbon transporter subunit DabA from Roseobacter denitrificans (strain ATCC 33942 / OCh 114) (Erythrobacter sp. (strain OCh 114)).